A 315-amino-acid polypeptide reads, in one-letter code: MAQPRIGQTVVVDVPATTANIGPGFDCLGAALDLNNRFTMRRIDGDGERFELIIEGQEGSHLRGGPDNLVYRAAQRVWKAAGQEPIAIEARVRLAVPPARGLGSSATAIVAGLVGANALVGEPLSREKLLELAIDIEGHPDNVVPSLLGGLCMTAKAASQRWRVVRCEWMHSIKAVVAIPAIRLSTSEARRAMPKSVPVGDAVVNLGALTLLLQGLRTGNGDLISDGMHDRLHEPYRWRLIKGGQEVKEAALSAGAWGCAISGAGPSILALCSEERGPAVSHAMVKAWEAAGVASRAPLLNLQTAGSHWQPKDAE.

97-107 (PPARGLGSSAT) contacts ATP.

The protein belongs to the GHMP kinase family. Homoserine kinase subfamily.

The protein resides in the cytoplasm. The enzyme catalyses L-homoserine + ATP = O-phospho-L-homoserine + ADP + H(+). It functions in the pathway amino-acid biosynthesis; L-threonine biosynthesis; L-threonine from L-aspartate: step 4/5. In terms of biological role, catalyzes the ATP-dependent phosphorylation of L-homoserine to L-homoserine phosphate. This Synechococcus sp. (strain CC9311) protein is Homoserine kinase.